The following is an 81-amino-acid chain: Large ribosomal subunit protein bL31B (81 aa).

It belongs to the bacterial ribosomal protein bL31 family. Type B subfamily. In terms of assembly, part of the 50S ribosomal subunit.

The sequence is that of Large ribosomal subunit protein bL31B from Limosilactobacillus reuteri (strain DSM 20016) (Lactobacillus reuteri).